Consider the following 506-residue polypeptide: Cytochrome P450 94B3 (506 aa).

A helical membrane pass occupies residues 2–22 (AFLLSFLILAFLITIIFFLSS). Heme is bound at residue Cys-447.

This sequence belongs to the cytochrome P450 family. It depends on heme as a cofactor.

Its subcellular location is the membrane. It localises to the endoplasmic reticulum membrane. The catalysed reaction is a jasmonyl-L-amino acid + reduced [NADPH--hemoprotein reductase] + O2 = a 12-hydroxyjasmonyl-L-alpha-amino acid + oxidized [NADPH--hemoprotein reductase] + H2O + H(+). It carries out the reaction L-isoleucine-(+)-7-isojasmonate + NADPH + O2 + H(+) = L-isoleucine-(+)-12-hydroxy-7-isojasmonate + NADP(+) + H2O. It catalyses the reaction a jasmonyl-L-isoleucinate + NADPH + O2 + H(+) = L-isoleucine-12-hydroxyjasmonate + NADP(+) + H2O. Functionally, hydroxylase involved in the oxidation of the plant hormone jasmonoyl-L-isoleucine (JA-Ile), a bioactive phytohormone of the jasmonate-mediated signaling pathway. Converts JA-Ile to 12-hydroxy-JA-Ile. Exerts negative feedback control on JA-Ile levels and plays a key role in attenuation of jasmonate responses. Negatively regulates the expression of wound-induced genes TIFY11A/JAZ5, TIFY5A/JAZ8 and TIFY5A/JAZ10. Catalyzes the hydroxylation of jasmonoyl-L-valine (JA-Val), jasmonoyl-L-leucine (JA-Leu) and jasmonoyl-L-phenylalanine (JA-Phe) in vitro. Converts JA-Val, JA-Leu and JA-Phe to 12-hydroxy-JA-Val, 12-hydroxy-JA-Leu and 12-hydroxy-JA-Phe, respectively. This is Cytochrome P450 94B3 from Arabidopsis thaliana (Mouse-ear cress).